Consider the following 266-residue polypeptide: tRNA pseudouridine synthase A (266 aa).

The Nucleophile role is filled by D53. Residue Y109 coordinates substrate.

This sequence belongs to the tRNA pseudouridine synthase TruA family.

It catalyses the reaction uridine(38/39/40) in tRNA = pseudouridine(38/39/40) in tRNA. Its function is as follows. Formation of pseudouridine at positions 38, 39 and 40 in the anticodon stem and loop of transfer RNAs. This Methanocella arvoryzae (strain DSM 22066 / NBRC 105507 / MRE50) protein is tRNA pseudouridine synthase A.